Here is a 448-residue protein sequence, read N- to C-terminus: Tubulin beta chain (448 aa).

8 residues coordinate GTP: Gln-11, Glu-69, Ser-138, Gly-142, Thr-143, Gly-144, Asn-204, and Asn-226. Glu-69 provides a ligand contact to Mg(2+).

This sequence belongs to the tubulin family. Dimer of alpha and beta chains. A typical microtubule is a hollow water-filled tube with an outer diameter of 25 nm and an inner diameter of 15 nM. Alpha-beta heterodimers associate head-to-tail to form protofilaments running lengthwise along the microtubule wall with the beta-tubulin subunit facing the microtubule plus end conferring a structural polarity. Microtubules usually have 13 protofilaments but different protofilament numbers can be found in some organisms and specialized cells. It depends on Mg(2+) as a cofactor.

The protein localises to the cytoplasm. It is found in the cytoskeleton. Tubulin is the major constituent of microtubules, a cylinder consisting of laterally associated linear protofilaments composed of alpha- and beta-tubulin heterodimers. Microtubules grow by the addition of GTP-tubulin dimers to the microtubule end, where a stabilizing cap forms. Below the cap, tubulin dimers are in GDP-bound state, owing to GTPase activity of alpha-tubulin. This chain is Tubulin beta chain (TUB1), found in Melampsora lini (Rust fungus).